A 177-amino-acid chain; its full sequence is MTYRKDLIASLIRDVPDFPEPGVTFKDITPLLANPNGYAAAISELVDTASRDVDVVLGMEARGFMFAGPVALSLGAGFVPVRKPGKLPGDVYSQSFVLEYGSATLTVHQDAVQPGSKVLIVDDVLATAGTVRATASLVEQLGAELVGVSVLIELSALGGREKLDRAGIGPVNAVLTI.

This sequence belongs to the purine/pyrimidine phosphoribosyltransferase family. Homodimer.

The protein resides in the cytoplasm. The enzyme catalyses AMP + diphosphate = 5-phospho-alpha-D-ribose 1-diphosphate + adenine. It functions in the pathway purine metabolism; AMP biosynthesis via salvage pathway; AMP from adenine: step 1/1. Functionally, catalyzes a salvage reaction resulting in the formation of AMP, that is energically less costly than de novo synthesis. This Cutibacterium acnes (strain DSM 16379 / KPA171202) (Propionibacterium acnes) protein is Adenine phosphoribosyltransferase.